A 225-amino-acid polypeptide reads, in one-letter code: Large ribosomal subunit protein uL1 (225 aa).

It belongs to the universal ribosomal protein uL1 family. In terms of assembly, part of the 50S ribosomal subunit.

In terms of biological role, binds directly to 23S rRNA. Probably involved in E site tRNA release. Its function is as follows. Protein L1 is also a translational repressor protein, it controls the translation of its operon by binding to its mRNA. In Thermofilum pendens (strain DSM 2475 / Hrk 5), this protein is Large ribosomal subunit protein uL1.